The chain runs to 323 residues: Fructose-1,6-bisphosphatase class 1 (323 aa).

Positions 84, 103, 105, and 106 each coordinate Mg(2+). Substrate is bound by residues 106–109 (DGSS), Asn-198, and Lys-264. A Mg(2+)-binding site is contributed by Glu-270.

This sequence belongs to the FBPase class 1 family. Homotetramer. It depends on Mg(2+) as a cofactor.

Its subcellular location is the cytoplasm. The enzyme catalyses beta-D-fructose 1,6-bisphosphate + H2O = beta-D-fructose 6-phosphate + phosphate. It participates in carbohydrate biosynthesis; gluconeogenesis. This Cellvibrio japonicus (strain Ueda107) (Pseudomonas fluorescens subsp. cellulosa) protein is Fructose-1,6-bisphosphatase class 1.